An 866-amino-acid chain; its full sequence is MMNHDTESHVKISRTIYRGVSPSTTRLESRVRELEDILDLERDARVRAERHAADLSYQVDALSERLDEAGGSTTQTQELLKRREMEINKLRKDLENANASLELAETSMRRRHQTALNELSLEVENLQKQKGKAEKDKSHLIMEVDNVLGQLDGALKAKQSAESKLEGLDSQLNRLKTLTDDLQRQLTELNNAKSRLTSENFELLHINQDYEAQILNYSKAKSSLESQVDDLKRSLDDESRNRFNLQAQLTSLQMDYDNLQAKYDEESEEASNLRNQVSKFNADIAALKSKFERELMSKTEEFEEMKRKLTMRITELEDVAERERLKAVSLEKLKTKLTLEIKDLQSEIESLSLENGELIRRAKSAESLASELQRRVDELTIEVNTLTSQNNQLESENMRLKSLVNDLTDKNNALERENRQMNDQVKELKSSLRDANRRLTDLEALRSQLEAERDNLASALHDAEEALRDMDQKYQASQAALNHLKSEMEQRLRERDEELESLRKSTTRTIEELTVTITEMEVKYKSELSRLKKRYESSIADLEIQLDATNKANANLMKENKNLAQRVKDLETFLDDERRLREAAENNLQITEHKRIQLANEVEELRSAMENLERLRKHAETELEETQSRVSELTIQVNTLSNDKRRLEGDIGVMQADMDDAINAKQAAEDRATRLNNEVLRLADELRQEQENYKHAEALRKQLEIEIREITVKLEEAEAFATREGRRMVQKLQARVRELEAEFDGESRRCKDALAQARKFERQYKELQTQAEDDRRMVLELQDLLDKTQMKMKAYKRQLEEMEEVSQITMNKYRKAQQQIEEAEHRADMAERTVTVRRVGPGGRAVSVARELSVTSNRGMRATSMM.

The interval 1–22 (MMNHDTESHVKISRTIYRGVSP) is nonhelical region. A coiled-coil region spans residues 23–839 (STTRLESRVR…AERTVTVRRV (817 aa)). A nonhelical region region spans residues 840–866 (GPGGRAVSVARELSVTSNRGMRATSMM).

Belongs to the paramyosin family. As to quaternary structure, homodimer.

The protein resides in the cytoplasm. It is found in the myofibril. In terms of biological role, paramyosin is a major structural component of many thick filaments isolated from invertebrate muscles. The sequence is that of Paramyosin from Schistosoma japonicum (Blood fluke).